A 689-amino-acid chain; its full sequence is DNA-directed RNA polymerase subunit beta' (689 aa).

Residues cysteine 69, cysteine 71, cysteine 87, and cysteine 90 each contribute to the Zn(2+) site. Positions 489, 491, and 493 each coordinate Mg(2+).

It belongs to the RNA polymerase beta' chain family. RpoC1 subfamily. In plastids the minimal PEP RNA polymerase catalytic core is composed of four subunits: alpha, beta, beta', and beta''. When a (nuclear-encoded) sigma factor is associated with the core the holoenzyme is formed, which can initiate transcription. The cofactor is Mg(2+). Zn(2+) is required as a cofactor.

It is found in the plastid. It localises to the chloroplast. It catalyses the reaction RNA(n) + a ribonucleoside 5'-triphosphate = RNA(n+1) + diphosphate. Functionally, DNA-dependent RNA polymerase catalyzes the transcription of DNA into RNA using the four ribonucleoside triphosphates as substrates. This is DNA-directed RNA polymerase subunit beta' from Helianthus annuus (Common sunflower).